A 156-amino-acid chain; its full sequence is Small ribosomal subunit protein uS7 (156 aa).

This sequence belongs to the universal ribosomal protein uS7 family. Part of the 30S ribosomal subunit. Contacts proteins S9 and S11.

In terms of biological role, one of the primary rRNA binding proteins, it binds directly to 16S rRNA where it nucleates assembly of the head domain of the 30S subunit. Is located at the subunit interface close to the decoding center, probably blocks exit of the E-site tRNA. The sequence is that of Small ribosomal subunit protein uS7 from Caldanaerobacter subterraneus subsp. tengcongensis (strain DSM 15242 / JCM 11007 / NBRC 100824 / MB4) (Thermoanaerobacter tengcongensis).